A 221-amino-acid chain; its full sequence is Immediate early response gene 2 protein (221 aa).

M1 is subject to N-acetylmethionine. A disordered region spans residues 54 to 156 (THQPEFPPSR…EGEATSEVSN (103 aa)). Basic and acidic residues predominate over residues 64 to 77 (RALDPRLHPPREPE). A compositionally biased stretch (low complexity) spans 125-136 (SDLSDGSDAGLV).

It belongs to the IER family.

The protein resides in the cytoplasm. It is found in the nucleus. Functionally, DNA-binding protein that seems to act as a transcription factor. Involved in the regulation of neuronal differentiation, acts upon JNK-signaling pathway activation and plays a role in neurite outgrowth in hippocampal cells. May mediate with FIBP FGF-signaling in the establishment of laterality in the embryo. Promotes cell motility, seems to stimulate tumor metastasis. The protein is Immediate early response gene 2 protein (Ier2) of Rattus norvegicus (Rat).